Reading from the N-terminus, the 63-residue chain is DNA-directed RNA polymerases I, II, and III subunit RPABC4 (63 aa).

Zn(2+) contacts are provided by Cys-24, Cys-27, Cys-41, and Cys-44. The segment at 24–44 adopts a C4-type zinc-finger fold; it reads CADCGARNTIQAKEVIRCREC.

This sequence belongs to the archaeal Rpo12/eukaryotic RPC10 RNA polymerase subunit family. Component of the RNA polymerase I (Pol I), RNA polymerase II (Pol II) and RNA polymerase III (Pol III) complexes consisting of 14, 12 and 17 subunits, respectively.

Its subcellular location is the nucleus. DNA-dependent RNA polymerase catalyzes the transcription of DNA into RNA using the four ribonucleoside triphosphates as substrates. Common component of RNA polymerases I, II and III which synthesize ribosomal RNA precursors, mRNA precursors and many functional non-coding RNAs, and a small RNAs, such as 5S rRNA and tRNAs, respectively. This chain is DNA-directed RNA polymerases I, II, and III subunit RPABC4 (rpc10), found in Schizosaccharomyces pombe (strain 972 / ATCC 24843) (Fission yeast).